The chain runs to 250 residues: mRNA-decapping protein g5R (250 aa).

The Nudix hydrolase domain occupies 97–239; it reads QKFRKNWLLP…NLEPMIGPAF (143 aa). Positions 132 to 153 match the Nudix box motif; that stretch reads GKPKEDESDLTCAIREFEEETG. Position 138 (glutamate 138) interacts with Mg(2+). Catalysis depends on glutamate 147, which acts as the Nucleophile. Mg(2+) is bound by residues glutamate 151 and aspartate 173.

This sequence belongs to the Nudix hydrolase family. DIPP subfamily. As to quaternary structure, interacts with host RPL23A. Mg(2+) is required as a cofactor. Mn(2+) serves as cofactor.

The protein localises to the host rough endoplasmic reticulum. It carries out the reaction diphospho-myo-inositol polyphosphate + H2O = myo-inositol polyphosphate + phosphate.. Its function is as follows. Decapping enzyme required for the removal of the 5'-end m7GpppN cap tethered to viral and host mRNAs to allow their decay in cells. May therefore accelerate viral and cellular mRNA turnover to eliminate competing host mRNAs and allow stage-specific synthesis of viral proteins. Acceleration of the turnover of cellular transcripts may even promote the shutoff of host protein synthesis. In addition to the mRNA cap, g5R also efficiently hydrolyzes diphosphoinositol polyphosphates. Down-regulation of the level of PP-InsP5 (diphosphoinositol pentakisphosphate) may play a role in viral manipulation of the cellular secretory pathway, a step necessary for the formation of virions. Binds viral and cellular poly(A) mRNAs, thereby decreasing both types of mRNAs. This is mRNA-decapping protein g5R from Ornithodoros (relapsing fever ticks).